Consider the following 328-residue polypeptide: Glutathionyl-hydroquinone reductase YqjG (328 aa).

The Nucleophile role is filled by C63. Residues W96, 130 to 133 (RVTV), and 148 to 149 (ES) each bind glutathione. Positions 172-296 (PPALQTKIDE…VNFDHIRNHY (125 aa)) constitute a GST C-terminal domain. Y195 acts as the Proton donor/acceptor in catalysis. Residues 203 to 311 (QEAYDEAVAK…TINPTGIISI (109 aa)) form a dimerization region.

This sequence belongs to the GST superfamily. Xi-class GSH transferase family. Homodimer.

The catalysed reaction is 2-(glutathione-S-yl)-hydroquinone + glutathione = hydroquinone + glutathione disulfide. In terms of biological role, catalyzes glutathione (GSH)-dependent reduction of glutathionyl-hydroquinones (GS-HQs) to the corresponding hydroquinones. Can use a variety of GS-HQs as substrates, such as GS-p-hydroquinone (GS-HQ), GS-hydroxy-p-hydroquinone (GS-HHQ), GS-methyl-p-hydroquinone (GS-MHQ), GS-menadiol, and GS-trichloro-p-hydroquinone (GS-TriCH). Also displays GSH-dependent disulfide-bond reduction activity toward HED (2-hydroxyethyl disulfide), and is able to catalyze DMA (dimethylarsinate) reduction. Exhibits no GSH transferase activity with 1-chloro-2,4-dinitrobenzene (CDNB). The polypeptide is Glutathionyl-hydroquinone reductase YqjG (yqjG) (Escherichia coli (strain K12)).